A 224-amino-acid polypeptide reads, in one-letter code: MVAAVLLGLSWLCSPLGALVLDFNNIRSSADLHGARKGSQCLSDTDCNTRKFCLQPRDEKPFCATCRGLRRRCQRDAMCCPGTLCVNDVCTTMEDATPILERQLDEQDGTHAEGTTGHPVQENQPKRKPSIKKSQGRKGQEGESCLRTFDCGPGLCCARHFWTKICKPVLLEGQVCSRRGHKDTAQAPEIFQRCDCGPGLLCRSQLTSNRQHARLRVCQKIEKL.

The N-terminal stretch at 1-18 is a signal peptide; sequence MVAAVLLGLSWLCSPLGA. The interval 41 to 90 is DKK-type Cys-1; the sequence is CLSDTDCNTRKFCLQPRDEKPFCATCRGLRRRCQRDAMCCPGTLCVNDVC. The interval 109-139 is disordered; sequence GTHAEGTTGHPVQENQPKRKPSIKKSQGRKG. Basic residues predominate over residues 126–136; the sequence is KRKPSIKKSQG. Disulfide bonds link C145/C157, C151/C166, C156/C194, C176/C202, and C196/C218. The DKK-type Cys-2 stretch occupies residues 145–218; that stretch reads CLRTFDCGPG…NRQHARLRVC (74 aa).

This sequence belongs to the dickkopf family. As to quaternary structure, interacts with LRP5 and LRP6. In terms of processing, appears to be not glycosylated. Post-translationally, can be proteolytically processed by a furin-like protease. As to expression, expressed in cerebellum, T-cells, esophagus and lung.

It localises to the secreted. Antagonizes canonical Wnt signaling by inhibiting LRP5/6 interaction with Wnt and by forming a ternary complex with the transmembrane protein KREMEN that promotes internalization of LRP5/6. DKKs play an important role in vertebrate development, where they locally inhibit Wnt regulated processes such as antero-posterior axial patterning, limb development, somitogenesis and eye formation. In the adult, Dkks are implicated in bone formation and bone disease, cancer and Alzheimer disease. This is Dickkopf-related protein 4 (DKK4) from Homo sapiens (Human).